We begin with the raw amino-acid sequence, 433 residues long: Histidinol dehydrogenase (433 aa).

S236, Q258, and H261 together coordinate substrate. Zn(2+) is bound by residues Q258 and H261. Active-site proton acceptor residues include E325 and H326. Positions 326, 359, 413, and 418 each coordinate substrate. D359 is a binding site for Zn(2+). H418 is a binding site for Zn(2+).

Belongs to the histidinol dehydrogenase family. The cofactor is Zn(2+).

It carries out the reaction L-histidinol + 2 NAD(+) + H2O = L-histidine + 2 NADH + 3 H(+). It participates in amino-acid biosynthesis; L-histidine biosynthesis; L-histidine from 5-phospho-alpha-D-ribose 1-diphosphate: step 9/9. In terms of biological role, catalyzes the sequential NAD-dependent oxidations of L-histidinol to L-histidinaldehyde and then to L-histidine. The polypeptide is Histidinol dehydrogenase (Pseudoalteromonas translucida (strain TAC 125)).